A 670-amino-acid chain; its full sequence is Carnitine O-acetyltransferase, mitochondrial (670 aa).

The active-site Proton acceptor is the His-378. CoA is bound by residues Lys-461 and 465–472; that span reads KRHGMSPD. (R)-carnitine is bound at residue Tyr-494. Ser-498 lines the CoA pocket. Thr-507 serves as a coordination point for (R)-carnitine. Gln-597 contributes to the CoA binding site. Residues 668–670 carry the Microbody targeting signal motif; that stretch reads AKL.

Belongs to the carnitine/choline acetyltransferase family.

The protein resides in the mitochondrion inner membrane. The protein localises to the peroxisome. It catalyses the reaction (R)-carnitine + acetyl-CoA = O-acetyl-(R)-carnitine + CoA. Functionally, carnitine acetylase is specific for short chain fatty acids. Carnitine acetylase seems to affect the flux through the pyruvate dehydrogenase complex. It may be involved as well in the transport of acetyl-CoA into mitochondria. In Saccharomyces cerevisiae (strain ATCC 204508 / S288c) (Baker's yeast), this protein is Carnitine O-acetyltransferase, mitochondrial (CAT2).